The chain runs to 88 residues: uncharacterized protein (88 aa).

2 consecutive transmembrane segments (helical) span residues 5-25 (AIPF…LLFV) and 36-56 (CYYL…VMIF).

It localises to the membrane. This is an uncharacterized protein from Saccharomyces cerevisiae (strain ATCC 204508 / S288c) (Baker's yeast).